We begin with the raw amino-acid sequence, 275 residues long: MPQVTMRQMLEAGVHFGHQTRYWNPKLAPYIFGARGKIHIINLEKTVPLFNDAMNFLSSIAQKRGTVLFLGTKRSARESIKEEAERCNMPFMTQRWLGGTLTNFRTVKQSVARLKELEAAETDGTFEKLVKHEVLGLRREREKLDASLGGIKEMNRLPDAIFVIDIGHEDIAIKEAKKLGIPVIAVVDTNYDPALVDYAIPGNDDAIRAVQLYARAAADAVLEGKAAAPNSASVREEEFSAEAGDEGKGRRAPAKKATEKKADAPAAAPEAPAAE.

Residues 226–275 are disordered; the sequence is AAAPNSASVREEEFSAEAGDEGKGRRAPAKKATEKKADAPAAAPEAPAAE. The segment covering 264–275 has biased composition (low complexity); that stretch reads APAAAPEAPAAE.

Belongs to the universal ribosomal protein uS2 family.

This is Small ribosomal subunit protein uS2 from Xanthomonas campestris pv. campestris (strain ATCC 33913 / DSM 3586 / NCPPB 528 / LMG 568 / P 25).